We begin with the raw amino-acid sequence, 84 residues long: Large ribosomal subunit protein bL31B-2 (84 aa).

It belongs to the bacterial ribosomal protein bL31 family. Type B subfamily. Part of the 50S ribosomal subunit.

In Streptomyces coelicolor (strain ATCC BAA-471 / A3(2) / M145), this protein is Large ribosomal subunit protein bL31B-2.